We begin with the raw amino-acid sequence, 766 residues long: ABC-type oligopeptide transporter ABCB9 (766 aa).

Transmembrane regions (helical) follow at residues 7-27, 47-67, 84-104, 116-136, 185-205, 225-245, 319-339, and 416-436; these read VVVT…IYVF, VLDL…ATIG, LVIT…LLLF, FWAL…LWWL, VAFL…ETFL, FSTA…AAGI, VFMF…FPII, and SGLT…HLVI. An ABC transmembrane type-1 domain is found at 188-471; the sequence is LVAASFFLIV…VGSVYSGLMQ (284 aa). Residues 504-740 form the ABC transporter domain; that stretch reads VDFENVTFTY…GGLYAKLVQR (237 aa). 539–546 provides a ligand contact to ATP; sequence GPSGSGKS.

This sequence belongs to the ABC transporter superfamily. ABCB family. MHC peptide exporter (TC 3.A.1.209) subfamily. Homodimer. Interacts (via TMD0 region) with LAMP1; this interaction strongly stabilizes ABCB9 and protects ABCB9 against lysosomal degradation. Interacts (via TMD0 region) with LAMP2 (isoform LAMP-2B). Interacts (via TMD0) with YIF1B; this interaction allows (but is not essential) the ER-to-Golgi trafficking and strongly depends on a salt bridge within TMD0. As to expression, highly expressed in testis, and at moderate levels in brain, spinal cord, and thyroid. Not expressed in monocytes but strongly expressed during differentiation of monocytes to dendritic cells and macrophages.

It localises to the lysosome membrane. The catalysed reaction is a [oligopeptide](in) + ATP + H2O = a [oligopeptide](out) + ADP + phosphate + H(+). With respect to regulation, transport activity is limited by threshold levels of luminal peptide. ATP hydrolysis is reduced in the presence of the spatial challenging 18-mer peptide by 50% and the branched 16-mer peptide by 75%. Transport rate of the longer peptides is strongly reduced. Its function is as follows. ATP-dependent low-affinity peptide transporter which translocates a broad spectrum of peptides from the cytosol to the lysosomal lumen for degradation. Displays a broad peptide length specificity from 6-mer up to at least 59-mer peptides with an optimum of 23-mers. Binds and transports smaller and larger peptides with the same affinity. Favors positively charged, aromatic or hydrophobic residues in the N- and C-terminal positions whereas negatively charged residues as well as asparagine and methionine are not favored. This Homo sapiens (Human) protein is ABC-type oligopeptide transporter ABCB9.